A 546-amino-acid polypeptide reads, in one-letter code: Chaperonin GroEL 1 (546 aa).

ATP-binding positions include 29–32 (TIGP), 86–90 (DGTTT), Gly-413, 477–479 (NAA), and Asp-493. A disordered region spans residues 523–546 (PAEPAPQDGHGHGHGHSHPQGPGF).

The protein belongs to the chaperonin (HSP60) family. As to quaternary structure, forms a cylinder of 14 subunits composed of two heptameric rings stacked back-to-back. Interacts with the co-chaperonin GroES.

It localises to the cytoplasm. The catalysed reaction is ATP + H2O + a folded polypeptide = ADP + phosphate + an unfolded polypeptide.. Its function is as follows. Together with its co-chaperonin GroES, plays an essential role in assisting protein folding. The GroEL-GroES system forms a nano-cage that allows encapsulation of the non-native substrate proteins and provides a physical environment optimized to promote and accelerate protein folding. The protein is Chaperonin GroEL 1 of Frankia casuarinae (strain DSM 45818 / CECT 9043 / HFP020203 / CcI3).